The sequence spans 602 residues: Elongation factor 4 (602 aa).

A tr-type G domain is found at 6–188 (DRIRNFCIIA…RIVRDVPPPG (183 aa)). GTP-binding positions include 18-23 (DHGKST) and 135-138 (NKID).

This sequence belongs to the TRAFAC class translation factor GTPase superfamily. Classic translation factor GTPase family. LepA subfamily.

Its subcellular location is the cell membrane. The enzyme catalyses GTP + H2O = GDP + phosphate + H(+). Functionally, required for accurate and efficient protein synthesis under certain stress conditions. May act as a fidelity factor of the translation reaction, by catalyzing a one-codon backward translocation of tRNAs on improperly translocated ribosomes. Back-translocation proceeds from a post-translocation (POST) complex to a pre-translocation (PRE) complex, thus giving elongation factor G a second chance to translocate the tRNAs correctly. Binds to ribosomes in a GTP-dependent manner. This Desulforudis audaxviator (strain MP104C) protein is Elongation factor 4.